We begin with the raw amino-acid sequence, 427 residues long: Glutamate-1-semialdehyde 2,1-aminomutase (427 aa).

Position 265 is an N6-(pyridoxal phosphate)lysine (Lys265).

The protein belongs to the class-III pyridoxal-phosphate-dependent aminotransferase family. HemL subfamily. As to quaternary structure, homodimer. Pyridoxal 5'-phosphate serves as cofactor.

The protein resides in the cytoplasm. The catalysed reaction is (S)-4-amino-5-oxopentanoate = 5-aminolevulinate. It participates in porphyrin-containing compound metabolism; protoporphyrin-IX biosynthesis; 5-aminolevulinate from L-glutamyl-tRNA(Glu): step 2/2. The sequence is that of Glutamate-1-semialdehyde 2,1-aminomutase from Pseudomonas putida (strain ATCC 700007 / DSM 6899 / JCM 31910 / BCRC 17059 / LMG 24140 / F1).